Reading from the N-terminus, the 502-residue chain is MNNNNVTEATSRAQIRPYYDPDSFNAGYSAVFKPDEGVVDPHGYTIASKLNVINSSPTTKRMANALFKSSPMKKLSNSVNDGLSLEGSNGEITGLNNFEWAELVNIQKWRKIFEQLLDMFFRKYFQLLIQQPFDVARLLIQVGEFKIFKTTVDTNKPQAPIILRDEEGDGAAREGEEDAYDEEEIDFFPIERKIAEANSTAPIMAEETDHSHHEPTDISLTIAPQSLHTIDVINALFDQEGIRGLWKANNTTFIYNFLSLSIDTWFTGLLSSFLGVPDPYFMEVINSPDISKSFILALGAGVFTSIILLPVDLIRTRLIVTSFKKKKNVKTDGKNMVTNTRSLRQLIRCWSWRKNGVSIPLDMWSLTILQSINNSFFNKLFDLVIYNQFHIEKYSQTVMYNTMKFFSKSLELFIKLPLENLLRRCQLNYLLNDQRLSFKVDSTELIVKPKKYNGIWDVIRNNSNTNRGQLWNGWKVGVISLICGYGLQMMNKVDINMEQEKF.

An N-acetylmethionine modification is found at M1. Topologically, residues 1-293 (MNNNNVTEAT…VINSPDISKS (293 aa)) are cytoplasmic. Positions 1-294 (MNNNNVTEAT…INSPDISKSF (294 aa)) are binds FZO1. The Solcar repeat unit spans residues 288-383 (PDISKSFILA…NSFFNKLFDL (96 aa)). A helical; Signal-anchor for type II membrane protein transmembrane segment spans residues 294–314 (FILALGAGVFTSIILLPVDLI). The tract at residues 312-502 (DLIRTRLIVT…VDINMEQEKF (191 aa)) is binds MGM1. Topologically, residues 315-502 (RTRLIVTSFK…VDINMEQEKF (188 aa)) are mitochondrial intermembrane.

In terms of assembly, interacts with FZO1 through its cytoplasmic domain and with MGM1 through its mitochondrial intermembrane space domain.

The protein resides in the mitochondrion outer membrane. Its function is as follows. Required for mitochondrial fusion as well as normal mitochondrial morphology by bridging the essential interaction between FZO1 and MGM1. May coordinate fusion of inner and outer membranes during mitochondrial fusion. This chain is Mitochondrial fusion and transport protein UGO1, found in Saccharomyces cerevisiae (strain ATCC 204508 / S288c) (Baker's yeast).